The sequence spans 151 residues: Superoxide dismutase [Cu-Zn] (151 aa).

The S-palmitoyl cysteine moiety is linked to residue Cys6. Residues His45, His47, and His62 each coordinate Cu cation. Cys56 and Cys144 form a disulfide bridge. His62, His70, His79, and Asp82 together coordinate Zn(2+). Cu cation is bound at residue His118.

The protein belongs to the Cu-Zn superoxide dismutase family. In terms of assembly, homodimer. Cu cation is required as a cofactor. The cofactor is Zn(2+).

Its subcellular location is the cytoplasm. The protein localises to the nucleus. It catalyses the reaction 2 superoxide + 2 H(+) = H2O2 + O2. Functionally, destroys radicals which are normally produced within the cells and which are toxic to biological systems. This chain is Superoxide dismutase [Cu-Zn] (sod1), found in Xenopus tropicalis (Western clawed frog).